A 284-amino-acid chain; its full sequence is Bifunctional protein FolD (284 aa).

Residues 166–168 and Ile-232 each bind NADP(+); that span reads GAS.

Belongs to the tetrahydrofolate dehydrogenase/cyclohydrolase family. Homodimer.

It carries out the reaction (6R)-5,10-methylene-5,6,7,8-tetrahydrofolate + NADP(+) = (6R)-5,10-methenyltetrahydrofolate + NADPH. The catalysed reaction is (6R)-5,10-methenyltetrahydrofolate + H2O = (6R)-10-formyltetrahydrofolate + H(+). It participates in one-carbon metabolism; tetrahydrofolate interconversion. Catalyzes the oxidation of 5,10-methylenetetrahydrofolate to 5,10-methenyltetrahydrofolate and then the hydrolysis of 5,10-methenyltetrahydrofolate to 10-formyltetrahydrofolate. This is Bifunctional protein FolD from Pseudomonas entomophila (strain L48).